Here is a 485-residue protein sequence, read N- to C-terminus: NADH-quinone oxidoreductase subunit N (485 aa).

Helical transmembrane passes span 8-28 (LIALLPLLIVGLTVVVVMLSI), 35-55 (FLNATLSVIGLNAALVSLWFV), 71-91 (GFAMLYTGLVLLASLATCTFA), 105-125 (FYLLVLIAALGGILLANANHL), 127-147 (SLFLGIELISLPLFGLVGYAF), 159-179 (YTILSAAASSFLLFGMALVYA), 203-223 (LLAGFGLMIVGLGFKLSLVPF), 235-255 (PAPVSTFLATASKIVIFGVVM), 271-291 (VVLAIIAFASIIFGNLMALSQ), 297-317 (LLGYSSISHLGYLLVALIALQ), 326-346 (VGVYLAGYLFSSLGAFGVVSL), 373-393 (AAVMTVMMLSLAGIPMTLGFI), 408-430 (WWLVGAVVVGSAIGLYYYLRVAV), and 455-475 (IVVLISALLVLVLGVWPQPLI).

The protein belongs to the complex I subunit 2 family. In terms of assembly, NDH-1 is composed of 13 different subunits. Subunits NuoA, H, J, K, L, M, N constitute the membrane sector of the complex.

Its subcellular location is the cell inner membrane. The catalysed reaction is a quinone + NADH + 5 H(+)(in) = a quinol + NAD(+) + 4 H(+)(out). NDH-1 shuttles electrons from NADH, via FMN and iron-sulfur (Fe-S) centers, to quinones in the respiratory chain. The immediate electron acceptor for the enzyme in this species is believed to be ubiquinone. Couples the redox reaction to proton translocation (for every two electrons transferred, four hydrogen ions are translocated across the cytoplasmic membrane), and thus conserves the redox energy in a proton gradient. The sequence is that of NADH-quinone oxidoreductase subunit N from Shigella dysenteriae serotype 1 (strain Sd197).